Here is a 91-residue protein sequence, read N- to C-terminus: Acylphosphatase (91 aa).

In terms of domain architecture, Acylphosphatase-like spans Ala-3–Ala-89. Active-site residues include Arg-18 and Asn-36.

The protein belongs to the acylphosphatase family.

The catalysed reaction is an acyl phosphate + H2O = a carboxylate + phosphate + H(+). The protein is Acylphosphatase (acyP) of Acidiphilium cryptum (strain JF-5).